Consider the following 268-residue polypeptide: Undecaprenyl-diphosphatase (268 aa).

The next 8 helical transmembrane spans lie at 3-23 (FFNL…EFIP), 46-66 (FEVL…SAKL), 84-104 (LGVL…HGFI), 107-127 (VLFE…FILL), 144-164 (YPLP…IPGV), 185-205 (AEFS…YDLF), 213-233 (FNDG…GVFV), and 246-266 (FALF…ALII).

Belongs to the UppP family.

The protein localises to the cell inner membrane. The catalysed reaction is di-trans,octa-cis-undecaprenyl diphosphate + H2O = di-trans,octa-cis-undecaprenyl phosphate + phosphate + H(+). Its function is as follows. Catalyzes the dephosphorylation of undecaprenyl diphosphate (UPP). Confers resistance to bacitracin. The chain is Undecaprenyl-diphosphatase from Brucella abortus (strain S19).